A 381-amino-acid polypeptide reads, in one-letter code: Succinyl-diaminopimelate desuccinylase (381 aa).

Residue H72 participates in Zn(2+) binding. D74 is an active-site residue. A Zn(2+)-binding site is contributed by D105. The active-site Proton acceptor is E139. Zn(2+)-binding residues include E140, E168, and H354.

This sequence belongs to the peptidase M20A family. DapE subfamily. As to quaternary structure, homodimer. The cofactor is Zn(2+). Co(2+) is required as a cofactor.

It catalyses the reaction N-succinyl-(2S,6S)-2,6-diaminopimelate + H2O = (2S,6S)-2,6-diaminopimelate + succinate. Its pathway is amino-acid biosynthesis; L-lysine biosynthesis via DAP pathway; LL-2,6-diaminopimelate from (S)-tetrahydrodipicolinate (succinylase route): step 3/3. Catalyzes the hydrolysis of N-succinyl-L,L-diaminopimelic acid (SDAP), forming succinate and LL-2,6-diaminopimelate (DAP), an intermediate involved in the bacterial biosynthesis of lysine and meso-diaminopimelic acid, an essential component of bacterial cell walls. In Shewanella sp. (strain MR-4), this protein is Succinyl-diaminopimelate desuccinylase.